The primary structure comprises 420 residues: Pre-mRNA-splicing factor RBM22 (420 aa).

A2 bears the N-acetylalanine mark. Phosphoserine occurs at positions 4 and 102. Residues K139 and K149 each participate in a glycyl lysine isopeptide (Lys-Gly) (interchain with G-Cter in SUMO2) cross-link. The C3H1-type zinc-finger motif lies at R159–P186. An N6-acetyllysine modification is found at K212. The RRM domain maps to T232–S305. K290 participates in a covalent cross-link: Glycyl lysine isopeptide (Lys-Gly) (interchain with G-Cter in SUMO2). Disordered stretches follow at residues G303–E343 and A372–P420. The span at R309–T318 shows a compositional bias: basic and acidic residues.

Belongs to the SLT11 family. In terms of assembly, component of the pre-catalytic and catalytic spliceosome complexes. Component of the postcatalytic spliceosome P complex. Interacts with PDCD6; the interaction induces translocation of PDCD6 in the cytoplasm. Interacts with PPIL1.

It localises to the nucleus. Its subcellular location is the cytoplasm. Required for pre-mRNA splicing as component of the activated spliceosome. Involved in the first step of pre-mRNA splicing. Binds directly to the internal stem-loop (ISL) domain of the U6 snRNA and to the pre-mRNA intron near the 5' splice site during the activation and catalytic phases of the spliceosome cycle. Involved in both translocations of the nuclear SLU7 to the cytoplasm and the cytosolic calcium-binding protein PDCD6 to the nucleus upon cellular stress responses. This chain is Pre-mRNA-splicing factor RBM22 (RBM22), found in Homo sapiens (Human).